Reading from the N-terminus, the 249-residue chain is MSAEAPKRQFGDRRRGGRRGGRRDGEEKGWTPVTKLGRLVKAGKITSVEQIYLHSLPVKEYQIIDLLLPDLKDDVMKIRSVQKQTRAGQRTRMKAVVVIGDSNGHVGLGIKTAKEVASAIKAAIVIAKLSIIPIRRGYWGSNLGQPHSLPCKVTGKCGSVAVRLIPAPRGKGIVASPVVKRLMQLAGVEDVYTSSSGSTRTTENTLKAAFAAIGNTYSFLTPNLWAETPLAASPLEVYAEEAAAGKKRY.

Residues 1-14 are compositionally biased toward basic and acidic residues; it reads MSAEAPKRQFGDRR. Positions 1-29 are disordered; the sequence is MSAEAPKRQFGDRRRGGRRGGRRDGEEKG. The 64-residue stretch at 71–134 folds into the S5 DRBM domain; that stretch reads LKDDVMKIRS…VIAKLSIIPI (64 aa).

This sequence belongs to the universal ribosomal protein uS5 family. As to quaternary structure, component of the small ribosomal subunit. Mature ribosomes consist of a small (40S) and a large (60S) subunit. The 40S subunit contains about 32 different proteins and 1 molecule of RNA (18S). The 60S subunit contains 45 different proteins and 3 molecules of RNA (25S, 5.8S and 5S).

The protein resides in the cytoplasm. Component of the ribosome, a large ribonucleoprotein complex responsible for the synthesis of proteins in the cell. The small ribosomal subunit (SSU) binds messenger RNAs (mRNAs) and translates the encoded message by selecting cognate aminoacyl-transfer RNA (tRNA) molecules. The large subunit (LSU) contains the ribosomal catalytic site termed the peptidyl transferase center (PTC), which catalyzes the formation of peptide bonds, thereby polymerizing the amino acids delivered by tRNAs into a polypeptide chain. The nascent polypeptides leave the ribosome through a tunnel in the LSU and interact with protein factors that function in enzymatic processing, targeting, and the membrane insertion of nascent chains at the exit of the ribosomal tunnel. RPS2 is important for the assembly and function of the 40S ribosomal subunitand is nvolved in nucleolar processing of pre-18S ribosomal RNA and ribosome assembly. The sequence is that of Small ribosomal subunit protein uS5 (RPS21) from Candida albicans (strain SC5314 / ATCC MYA-2876) (Yeast).